A 695-amino-acid chain; its full sequence is Follicle-stimulating hormone receptor (695 aa).

The signal sequence occupies residues 1 to 17 (MALLLVALLAFLSLGSG). Disulfide bonds link cysteine 18-cysteine 25 and cysteine 23-cysteine 32. The LRRNT domain occupies 18-46 (CHHRLCHCSNGVFLCQESKVTEIPSDLPR). The Extracellular portion of the chain corresponds to 18–366 (CHHRLCHCSN…EDIMGDDILR (349 aa)). 9 LRR repeats span residues 49 to 72 (VELR…FGDL), 73 to 97 (EKIE…LPKL), 98 to 118 (HEIR…AFQN), 119 to 143 (LPNL…KIQS), 144 to 169 (LQKV…MGLS), 170 to 192 (FESM…AFNG), 193 to 216 (TQLD…VFQG), 217 to 240 (ASGP…GLEN), and 241 to 259 (LKKL…PSLE). N-linked (GlcNAc...) asparagine glycans are attached at residues asparagine 191 and asparagine 199. Intrachain disulfides connect cysteine 275–cysteine 346, cysteine 276–cysteine 292, cysteine 276–cysteine 356, and cysteine 292–cysteine 338. Asparagine 293 is a glycosylation site (N-linked (GlcNAc...) asparagine). A Sulfotyrosine modification is found at tyrosine 335. A helical transmembrane segment spans residues 367–387 (VLIWFISILAITGNILVLVIL). Topologically, residues 388 to 398 (ITSQYKLTVPR) are cytoplasmic. A helical transmembrane segment spans residues 399-421 (FLMCNLAFADLCIGIYLLLIASV). Topologically, residues 422-443 (DVHTKTEYHNYAIDWQTGAGCD) are extracellular. The cysteines at positions 442 and 517 are disulfide-linked. The chain crosses the membrane as a helical span at residues 444–465 (AAGFFTVFASELSVYTLTAITL). Topologically, residues 466 to 485 (ERWHTITHAMQLECKVQLRH) are cytoplasmic. Residues 486-508 (AASIMLVGWIFAFAVALFPIFGI) traverse the membrane as a helical segment. Topologically, residues 509 to 528 (SSYMKVSICLPMDIDSPLSQ) are extracellular. The helical transmembrane segment at 529-550 (LYVMSLLVLNVLAFVVICGCYT) threads the bilayer. Topologically, residues 551 to 573 (HIYLTVRNPNITSSSSDTKIAKR) are cytoplasmic. A helical transmembrane segment spans residues 574–597 (MAMLIFTDFLCMAPISFFAISASL). Over 598–608 (KVPLITVSKSK) the chain is Extracellular. A helical transmembrane segment spans residues 609 to 630 (ILLVLFYPINSCANPFLYAIFT). Topologically, residues 631-695 (KNFRRDFFIL…LIPLRHLAKN (65 aa)) are cytoplasmic.

This sequence belongs to the G-protein coupled receptor 1 family. FSH/LSH/TSH subfamily. As to quaternary structure, homotrimer. Functions as a homotrimer binding the FSH hormone heterodimer composed of CGA and FSHB. Interacts with ARRB2. Interacts with APPL2; interaction is independent of follicle stimulating hormone stimulation. N-glycosylated; indirectly required for FSH-binding, possibly via a conformational change that allows high affinity binding of hormone. In terms of processing, sulfated.

It localises to the cell membrane. In terms of biological role, g protein-coupled receptor for follitropin, the follicle-stimulating hormone. Through cAMP production activates the downstream PI3K-AKT and ERK1/ERK2 signaling pathways. The protein is Follicle-stimulating hormone receptor (FSHR) of Bos taurus (Bovine).